The following is a 244-amino-acid chain: Small ribosomal subunit protein eS4 (244 aa).

Residues 1-14 (MANKGPRKHLKRLP) show a composition bias toward basic residues. The tract at residues 1–36 (MANKGPRKHLKRLPAPKNWQISRKTNKYTTRPSAGP) is disordered. A compositionally biased stretch (polar residues) spans 19–32 (WQISRKTNKYTTRP). The region spanning 43 to 106 (LPLLLVLRDL…NESFLVVLDE (64 aa)) is the S4 RNA-binding domain.

It belongs to the eukaryotic ribosomal protein eS4 family.

The protein is Small ribosomal subunit protein eS4 of Methanococcus aeolicus (strain ATCC BAA-1280 / DSM 17508 / OCM 812 / Nankai-3).